The primary structure comprises 663 residues: Protein LNK2 (663 aa).

2 disordered regions span residues 528–549 and 590–663; these read HYTSDTSHSNKTSQDDQEVIPR and MEGP…KRKL. Basic and acidic residues predominate over residues 602 to 629; sequence GTEEKGNFPKCSIRETHLTKQKAQKEEG. Residues 639–648 are compositionally biased toward polar residues; sequence APNSGSSSTV.

In terms of assembly, interacts with CCA1, LHY, REV4 and REV8, but not with PRR7 or PRR9. In terms of tissue distribution, expressed in roots, stems, leaves, seedlings, cotyledons, inflorescences and siliques. Highest expression in root tips, young leaves and vasculatur tissues.

It is found in the nucleus. Transcriptional coactivator necessary for expression of the clock genes PRR5 and TOC1. Antagonizes REV8 function in the regulation of anthocyanin accumulation. Involved in red light input to the clock. Activates clock-controlled genes with afternoon peak. Mediates light inhibition of hypocotyl elongation. Unable to bind to DNA, but recruited to the evening element (EE)-containing region of the PRR5 and TOC1 promoters through its interaction with the DNA binding proteins REV8 and REV4. This Arabidopsis thaliana (Mouse-ear cress) protein is Protein LNK2.